Consider the following 511-residue polypeptide: Cytochrome P450 89A9 (511 aa).

A helical; Signal-anchor for type II membrane protein transmembrane segment spans residues 6–26 (IIFLIISSLTFSIFLKLIFFF). Residue C454 coordinates heme.

The protein belongs to the cytochrome P450 family. Heme is required as a cofactor.

The protein localises to the endoplasmic reticulum membrane. The enzyme catalyses primary fluorescent chlorophyll catabolite + reduced [NADPH--hemoprotein reductase] + O2 = primary fluorescent dioxobilin-type chlorophyll catabolite + formate + oxidized [NADPH--hemoprotein reductase] + 2 H(+). It functions in the pathway porphyrin-containing compound metabolism; chlorophyll degradation. In terms of biological role, involved in the chlorophyll breakdown by its action in nonpolar primary fluorescent chlorophyll catabolite (pFCC) decarbonylation. Involved in the formation of major chlorophyll breakdown products, including non-fluorescent dioxobilin-type chlorophyll catabolites (NDCCs), during leaf senescence. The sequence is that of Cytochrome P450 89A9 from Arabidopsis thaliana (Mouse-ear cress).